The sequence spans 488 residues: Ribulose bisphosphate carboxylase large chain (488 aa).

Residues asparagine 127 and threonine 177 each contribute to the substrate site. Lysine 179 (proton acceptor) is an active-site residue. Lysine 181 contributes to the substrate binding site. The Mg(2+) site is built by lysine 205, aspartate 207, and glutamate 208. Lysine 205 carries the N6-carboxylysine modification. Histidine 297 serves as the catalytic Proton acceptor. Residues arginine 298, histidine 330, and serine 382 each coordinate substrate.

Belongs to the RuBisCO large chain family. Type I subfamily. Heterohexadecamer of 8 large chains and 8 small chains. Requires Mg(2+) as cofactor.

The protein localises to the plastid. It is found in the chloroplast. It catalyses the reaction 2 (2R)-3-phosphoglycerate + 2 H(+) = D-ribulose 1,5-bisphosphate + CO2 + H2O. It carries out the reaction D-ribulose 1,5-bisphosphate + O2 = 2-phosphoglycolate + (2R)-3-phosphoglycerate + 2 H(+). Its function is as follows. RuBisCO catalyzes two reactions: the carboxylation of D-ribulose 1,5-bisphosphate, the primary event in carbon dioxide fixation, as well as the oxidative fragmentation of the pentose substrate in the photorespiration process. Both reactions occur simultaneously and in competition at the same active site. The sequence is that of Ribulose bisphosphate carboxylase large chain from Pyropia suborbiculata (Red alga).